A 131-amino-acid chain; its full sequence is Small ribosomal subunit protein uS8 (131 aa).

The protein belongs to the universal ribosomal protein uS8 family. In terms of assembly, part of the 30S ribosomal subunit. Contacts proteins S5 and S12.

Functionally, one of the primary rRNA binding proteins, it binds directly to 16S rRNA central domain where it helps coordinate assembly of the platform of the 30S subunit. This chain is Small ribosomal subunit protein uS8, found in Azoarcus sp. (strain BH72).